Here is a 345-residue protein sequence, read N- to C-terminus: Isocitrate lyase (345 aa).

58–60 (SGY) lines the substrate pocket. Asp-98 contacts Mg(2+). The Proton acceptor role is filled by Cys-135. Residues 136–137 (GH), Arg-170, 230–234 (NYSSS), and Thr-260 each bind substrate. A disordered region spans residues 318-345 (DPEARRRIEESEGFSEEQADPITSNDDD). Over residues 328–345 (SEGFSEEQADPITSNDDD) the composition is skewed to acidic residues.

As to quaternary structure, homotetramer or homotrimer. Requires Mg(2+) as cofactor.

It carries out the reaction D-threo-isocitrate = glyoxylate + succinate. It functions in the pathway carbohydrate metabolism; glyoxylate cycle; (S)-malate from isocitrate: step 1/2. In terms of biological role, involved in the metabolic adaptation in response to environmental changes. Catalyzes the reversible formation of succinate and glyoxylate from isocitrate, a key step of the glyoxylate cycle, which operates as an anaplerotic route for replenishing the tricarboxylic acid cycle during growth on fatty acid substrates. The sequence is that of Isocitrate lyase (aceA) from Haloferax volcanii (strain ATCC 29605 / DSM 3757 / JCM 8879 / NBRC 14742 / NCIMB 2012 / VKM B-1768 / DS2) (Halobacterium volcanii).